The sequence spans 168 residues: Peroxynitrite isomerase (168 aa).

The GXWXGXG signature appears at 25–31 (GTWRGAG). Heme b is bound at residue H160.

Belongs to the nitrobindin family. In terms of assembly, homodimer. Heme b is required as a cofactor.

The enzyme catalyses peroxynitrite = nitrate. It participates in nitrogen metabolism. In terms of biological role, heme-binding protein able to scavenge peroxynitrite and to protect free L-tyrosine against peroxynitrite-mediated nitration, by acting as a peroxynitrite isomerase that converts peroxynitrite to nitrate. Therefore, this protein likely plays a role in peroxynitrite sensing and in the detoxification of reactive nitrogen and oxygen species (RNS and ROS, respectively). Is able to bind nitric oxide (NO) in vitro, but may act as a sensor of peroxynitrite levels in vivo. This chain is Peroxynitrite isomerase, found in Nocardia farcinica (strain IFM 10152).